Here is a 288-residue protein sequence, read N- to C-terminus: Light-independent protochlorophyllide reductase iron-sulfur ATP-binding protein (288 aa).

Residues 10-15 and lysine 39 each bind ATP; that span reads GIGKST. Serine 14 serves as a coordination point for Mg(2+). [4Fe-4S] cluster contacts are provided by cysteine 95 and cysteine 129. 180 to 181 is a binding site for ATP; sequence NR.

This sequence belongs to the NifH/BchL/ChlL family. As to quaternary structure, homodimer. Protochlorophyllide reductase is composed of three subunits; ChlL, ChlN and ChlB. [4Fe-4S] cluster is required as a cofactor.

It catalyses the reaction chlorophyllide a + oxidized 2[4Fe-4S]-[ferredoxin] + 2 ADP + 2 phosphate = protochlorophyllide a + reduced 2[4Fe-4S]-[ferredoxin] + 2 ATP + 2 H2O. Its pathway is porphyrin-containing compound metabolism; chlorophyll biosynthesis (light-independent). In terms of biological role, component of the dark-operative protochlorophyllide reductase (DPOR) that uses Mg-ATP and reduced ferredoxin to reduce ring D of protochlorophyllide (Pchlide) to form chlorophyllide a (Chlide). This reaction is light-independent. The L component serves as a unique electron donor to the NB-component of the complex, and binds Mg-ATP. This is Light-independent protochlorophyllide reductase iron-sulfur ATP-binding protein from Trichodesmium erythraeum (strain IMS101).